A 317-amino-acid polypeptide reads, in one-letter code: L-lactate dehydrogenase (317 aa).

Val16, Asp37, and Tyr68 together coordinate NAD(+). Substrate-binding positions include Gln85, Arg91, 123–126, and 151–154; these read NPCD and DSAR. An NAD(+)-binding site is contributed by 121-123; the sequence is ASN. Catalysis depends on His178, which acts as the Proton acceptor. Tyr222 is subject to Phosphotyrosine. Thr231 is a binding site for substrate.

The protein belongs to the LDH/MDH superfamily. LDH family. In terms of assembly, homotetramer.

The protein resides in the cytoplasm. It catalyses the reaction (S)-lactate + NAD(+) = pyruvate + NADH + H(+). It participates in fermentation; pyruvate fermentation to lactate; (S)-lactate from pyruvate: step 1/1. Catalyzes the conversion of lactate to pyruvate. This Mesoplasma florum (strain ATCC 33453 / NBRC 100688 / NCTC 11704 / L1) (Acholeplasma florum) protein is L-lactate dehydrogenase.